The following is a 349-amino-acid chain: DNA replication and repair protein RecF (349 aa).

Residue G30–T37 coordinates ATP.

It belongs to the RecF family.

It is found in the cytoplasm. Functionally, the RecF protein is involved in DNA metabolism; it is required for DNA replication and normal SOS inducibility. RecF binds preferentially to single-stranded, linear DNA. It also seems to bind ATP. This is DNA replication and repair protein RecF from Francisella tularensis subsp. holarctica (strain FTNF002-00 / FTA).